Reading from the N-terminus, the 77-residue chain is Acyl carrier protein (77 aa).

Residues 1–76 (MAVFDDVRDV…DVVNYIEKLG (76 aa)) form the Carrier domain. Serine 36 is subject to O-(pantetheine 4'-phosphoryl)serine.

This sequence belongs to the acyl carrier protein (ACP) family. Post-translationally, 4'-phosphopantetheine is transferred from CoA to a specific serine of apo-ACP by AcpS. This modification is essential for activity because fatty acids are bound in thioester linkage to the sulfhydryl of the prosthetic group.

Its subcellular location is the cytoplasm. Its pathway is lipid metabolism; fatty acid biosynthesis. In terms of biological role, carrier of the growing fatty acid chain in fatty acid biosynthesis. This chain is Acyl carrier protein, found in Campylobacter curvus (strain 525.92).